The sequence spans 311 residues: tRNA-cytidine(32) 2-sulfurtransferase (311 aa).

The PP-loop motif signature appears at serine 47–serine 52. Positions 122, 125, and 213 each coordinate [4Fe-4S] cluster.

Belongs to the TtcA family. As to quaternary structure, homodimer. The cofactor is Mg(2+). [4Fe-4S] cluster serves as cofactor.

The protein localises to the cytoplasm. The enzyme catalyses cytidine(32) in tRNA + S-sulfanyl-L-cysteinyl-[cysteine desulfurase] + AH2 + ATP = 2-thiocytidine(32) in tRNA + L-cysteinyl-[cysteine desulfurase] + A + AMP + diphosphate + H(+). The protein operates within tRNA modification. Functionally, catalyzes the ATP-dependent 2-thiolation of cytidine in position 32 of tRNA, to form 2-thiocytidine (s(2)C32). The sulfur atoms are provided by the cysteine/cysteine desulfurase (IscS) system. This chain is tRNA-cytidine(32) 2-sulfurtransferase, found in Shigella flexneri serotype 5b (strain 8401).